A 1601-amino-acid chain; its full sequence is Polycomb group protein Psc (1601 aa).

2 disordered regions span residues 1–91 and 165–245; these read MMTP…TTTT and NGIK…DLAT. Composition is skewed to low complexity over residues 8 to 91 and 182 to 198; these read AIQP…TTTT and SSSS…SSSS. Residues 199–215 are compositionally biased toward polar residues; that stretch reads WPTTRRATSEDASSNGG. Residues 228-245 are compositionally biased toward low complexity; that stretch reads TAAVAASSTATTTSDLAT. The segment at 263-302 adopts an RING-type zinc-finger fold; the sequence is CHLCQGYLINATTIVECLHSFCHSCLINHLRKERFCPRCE. 7 disordered regions span residues 561–693, 711–856, 895–960, 1011–1097, 1116–1315, 1330–1408, and 1512–1601; these read KREK…FSED, VESP…NRTP, IGGG…SNNY, YKYT…EKQQ, SITI…LAPK, NPAA…HPVM, and AATG…TKSK. Residues 567-590 are compositionally biased toward low complexity; it reads SPQMSSKSSSKSSPCTPVSSPSEP. Residues 611–637 are compositionally biased toward basic and acidic residues; it reads DPERREIVKPLKPEKESRSKKKDKDGS. A compositionally biased stretch (low complexity) spans 638 to 649; that stretch reads PKSSSSSSSSSS. Ser-656 and Ser-658 each carry phosphoserine. The segment covering 676 to 689 has biased composition (polar residues); that stretch reads SGVSTLSPRVTSGA. Positions 729-739 are enriched in low complexity; sequence SVQQSASPKSK. The span at 812–822 shows a compositional bias: pro residues; it reads LMPPPAKPPML. Over residues 929-938 the composition is skewed to polar residues; it reads TTPSQGNKNV. Low complexity predominate over residues 1011 to 1022; that stretch reads YKYTPKPTPNSG. Positions 1036–1045 are enriched in gly residues; that stretch reads LGGGNGGSLG. The segment covering 1069-1085 has biased composition (low complexity); sequence SSATQSGGNNGIVNNNI. Polar residues predominate over residues 1116–1133; sequence SITISRDNGDSSSPNNGQ. Phosphoserine is present on Ser-1139. Positions 1204–1217 are enriched in pro residues; the sequence is PQLPKVATPPPPSS. A phosphothreonine mark is found at Thr-1222, Thr-1236, and Thr-1251. Basic and acidic residues predominate over residues 1247–1258; the sequence is VDKKTPSPEKRT. Phosphoserine occurs at positions 1253, 1266, and 1274. The segment covering 1261–1272 has biased composition (polar residues); that stretch reads QMGSHSPTASEN. Composition is skewed to polar residues over residues 1352-1375 and 1561-1587; these read QSGQ…SPPA and APQT…NNGA.

Component of PRC1 complex, which contains many PcG proteins like Pc, ph, Scm, Psc, Sce and also chromatin-remodeling proteins such as histone deacetylases. This complex is distinct from the Esc/E(z) complex, at least composed of esc, E(z), Su(z)12, HDAC1/Rpd3 and Caf1-55. The 2 complexes however cooperate and interact together during the first 3 hours of development to establish PcG silencing.

The protein resides in the nucleus. Functionally, polycomb group (PcG) protein. PcG proteins act by forming multiprotein complexes, which are required to maintain the transcriptionally repressive state of homeotic genes throughout development. PcG proteins are not required to initiate repression, but to maintain it during later stages of development. Component of the PcG multiprotein PRC1 complex, a complex that acts via chromatin remodeling and modification of histones; it mediates monoubiquitination of histone H2A 'Lys-118', rendering chromatin heritably changed in its expressibility. Needed to maintain expression patterns of the homeotic selector genes of the Antennapedia (Antp-C) and Bithorax (BX-C) complexes, and hence for the maintenance of segmental determination. This chain is Polycomb group protein Psc (Psc), found in Drosophila melanogaster (Fruit fly).